The sequence spans 109 residues: Large ribosomal subunit protein uL22 (109 aa).

This sequence belongs to the universal ribosomal protein uL22 family. As to quaternary structure, part of the 50S ribosomal subunit.

Its function is as follows. This protein binds specifically to 23S rRNA; its binding is stimulated by other ribosomal proteins, e.g. L4, L17, and L20. It is important during the early stages of 50S assembly. It makes multiple contacts with different domains of the 23S rRNA in the assembled 50S subunit and ribosome. The globular domain of the protein is located near the polypeptide exit tunnel on the outside of the subunit, while an extended beta-hairpin is found that lines the wall of the exit tunnel in the center of the 70S ribosome. The sequence is that of Large ribosomal subunit protein uL22 from Herminiimonas arsenicoxydans.